Here is a 92-residue protein sequence, read N- to C-terminus: Signal recognition particle 19 kDa protein (92 aa).

The protein belongs to the SRP19 family. As to quaternary structure, part of the signal recognition particle protein translocation system, which is composed of SRP and FtsY. Archaeal SRP consists of a 7S RNA molecule of 300 nucleotides and two protein subunits: SRP54 and SRP19.

It localises to the cytoplasm. Functionally, involved in targeting and insertion of nascent membrane proteins into the cytoplasmic membrane. Binds directly to 7S RNA and mediates binding of the 54 kDa subunit of the SRP. This chain is Signal recognition particle 19 kDa protein, found in Halorubrum lacusprofundi (strain ATCC 49239 / DSM 5036 / JCM 8891 / ACAM 34).